The sequence spans 215 residues: Protein LURP-one-related 4 (215 aa).

Belongs to the LOR family.

In terms of biological role, might be related to the phospholipid scramblase and tubby-like superfamily of membrane tethered transcription factors. The polypeptide is Protein LURP-one-related 4 (Arabidopsis thaliana (Mouse-ear cress)).